A 455-amino-acid polypeptide reads, in one-letter code: Yop proteins translocation protein P (455 aa).

2 disordered regions span residues 38–82 and 430–455; these read NKGN…QPGR and DFQA…EAEE. Basic and acidic residues-rich tracts occupy residues 43 to 69 and 439 to 449; these read HPKE…DGLR and QESRQKRHVYE.

This sequence belongs to the SpaN family.

It localises to the cytoplasm. Its function is as follows. Component of the yop secretion machinery. This chain is Yop proteins translocation protein P (yscP), found in Yersinia pseudotuberculosis serotype I (strain IP32953).